The chain runs to 234 residues: Urease accessory protein UreG 1 (234 aa).

Positions 1-29 (MTRTPTGVPMHLGHTHDAPAAVSADATRP) are disordered. A GTP-binding site is contributed by 42-49 (GPVGSGKT).

This sequence belongs to the SIMIBI class G3E GTPase family. UreG subfamily. Homodimer. UreD, UreF and UreG form a complex that acts as a GTP-hydrolysis-dependent molecular chaperone, activating the urease apoprotein by helping to assemble the nickel containing metallocenter of UreC. The UreE protein probably delivers the nickel.

The protein localises to the cytoplasm. In terms of biological role, facilitates the functional incorporation of the urease nickel metallocenter. This process requires GTP hydrolysis, probably effectuated by UreG. The protein is Urease accessory protein UreG 1 of Streptomyces griseus subsp. griseus (strain JCM 4626 / CBS 651.72 / NBRC 13350 / KCC S-0626 / ISP 5235).